Consider the following 223-residue polypeptide: UPF0441 protein KPK_0672 (223 aa).

A disordered region spans residues 165–223 (SYGAAQPGRTMNVPKTAMAPKPATTTTVTRGGFGESVAKQSTMQRSAAGSTSSSRSMGG). Low complexity-rich tracts occupy residues 177-193 (VPKT…TTVT) and 209-223 (RSAA…SMGG).

Belongs to the UPF0441 family.

In Klebsiella pneumoniae (strain 342), this protein is UPF0441 protein KPK_0672.